The primary structure comprises 299 residues: Exosome complex component rrp42 (299 aa).

It belongs to the RNase PH family. As to quaternary structure, component of the RNA exosome complex. Specifically part of the catalytically inactive RNA exosome core complex (Exo-9) which may associate with the catalytic subunits rrp6 and dis3 in cytoplasmic- and nuclear-specific RNA exosome complex forms. Exo-9 is formed by a hexameric base ring of RNase PH domain-containing subunits and a cap ring consisting of csl4, rrp4 and rrp40.

The protein localises to the cytoplasm. It is found in the nucleus. It localises to the nucleolus. Functionally, non-catalytic component of the RNA exosome complex which has 3'-&gt;5' exoribonuclease activity and participates in a multitude of cellular RNA processing and degradation events. In the nucleus, the RNA exosome complex is involved in proper maturation of stable RNA species such as rRNA, snRNA and snoRNA, in the elimination of RNA processing by-products and non-coding 'pervasive' transcripts, such as antisense RNA species and cryptic unstable transcripts (CUTs), and of mRNAs with processing defects, thereby limiting or excluding their export to the cytoplasm. In the cytoplasm, the RNA exosome complex is involved in general mRNA turnover and in RNA surveillance pathways, preventing translation of aberrant mRNAs. The catalytic inactive RNA exosome core complex of 9 subunits (Exo-9) is proposed to play a pivotal role in the binding and presentation of RNA for ribonucleolysis, and to serve as a scaffold for the association with catalytic subunits and accessory proteins or complexes. ski6 is part of the hexameric ring of RNase PH domain-containing subunits proposed to form a central channel which threads RNA substrates for degradation. The chain is Exosome complex component rrp42 (rrp42) from Schizosaccharomyces pombe (strain 972 / ATCC 24843) (Fission yeast).